Here is a 119-residue protein sequence, read N- to C-terminus: NADH-quinone oxidoreductase subunit A (119 aa).

Transmembrane regions (helical) follow at residues 7–27 (FPVL…MTIG), 63–83 (LIAI…PWGV), and 88–108 (IGWP…VGFV).

The protein belongs to the complex I subunit 3 family. In terms of assembly, NDH-1 is composed of 14 different subunits. Subunits NuoA, H, J, K, L, M, N constitute the membrane sector of the complex.

The protein resides in the cell inner membrane. It carries out the reaction a quinone + NADH + 5 H(+)(in) = a quinol + NAD(+) + 4 H(+)(out). Its function is as follows. NDH-1 shuttles electrons from NADH, via FMN and iron-sulfur (Fe-S) centers, to quinones in the respiratory chain. The immediate electron acceptor for the enzyme in this species is believed to be ubiquinone. Couples the redox reaction to proton translocation (for every two electrons transferred, four hydrogen ions are translocated across the cytoplasmic membrane), and thus conserves the redox energy in a proton gradient. This Ralstonia nicotianae (strain ATCC BAA-1114 / GMI1000) (Ralstonia solanacearum) protein is NADH-quinone oxidoreductase subunit A.